The primary structure comprises 70 residues: UPF0270 protein VP2791 (70 aa).

Belongs to the UPF0270 family.

The chain is UPF0270 protein VP2791 from Vibrio parahaemolyticus serotype O3:K6 (strain RIMD 2210633).